Consider the following 216-residue polypeptide: Trimethylamine corrinoid protein 1 (216 aa).

The region spanning 1–92 (MANKEEIIAK…EMEKRKSQTK (92 aa)) is the B12-binding N-terminal domain. In terms of domain architecture, B12-binding spans 94–216 (LGTIVIGTIE…VVSKVKAALL (123 aa)). Residue H107 participates in methylcob(III)alamin binding.

It belongs to the methylamine corrinoid protein family. Can form a complex with MttB.

It functions in the pathway one-carbon metabolism; methanogenesis from trimethylamine. In terms of biological role, acts probably as a methyl group carrier between MttB and either MtbA or MtaA. In Methanosarcina mazei (strain ATCC BAA-159 / DSM 3647 / Goe1 / Go1 / JCM 11833 / OCM 88) (Methanosarcina frisia), this protein is Trimethylamine corrinoid protein 1 (mttC1).